Reading from the N-terminus, the 359-residue chain is Phospho-N-acetylmuramoyl-pentapeptide-transferase (359 aa).

Transmembrane regions (helical) follow at residues 3–23 (QIMI…PALI), 55–75 (VAIL…GLAF), 80–100 (ITAS…VGFL), 117–137 (TAKT…VLQF), 156–176 (IATV…VVSA), 187–207 (LDGL…LITF), 231–251 (LALI…WNAA), 255–275 (IFMG…LSVT), 280–300 (ILAV…VLQI), and 334–354 (FWLL…GEWL).

This sequence belongs to the glycosyltransferase 4 family. MraY subfamily. It depends on Mg(2+) as a cofactor.

It localises to the cell inner membrane. It catalyses the reaction UDP-N-acetyl-alpha-D-muramoyl-L-alanyl-gamma-D-glutamyl-meso-2,6-diaminopimeloyl-D-alanyl-D-alanine + di-trans,octa-cis-undecaprenyl phosphate = di-trans,octa-cis-undecaprenyl diphospho-N-acetyl-alpha-D-muramoyl-L-alanyl-D-glutamyl-meso-2,6-diaminopimeloyl-D-alanyl-D-alanine + UMP. The protein operates within cell wall biogenesis; peptidoglycan biosynthesis. Its function is as follows. Catalyzes the initial step of the lipid cycle reactions in the biosynthesis of the cell wall peptidoglycan: transfers peptidoglycan precursor phospho-MurNAc-pentapeptide from UDP-MurNAc-pentapeptide onto the lipid carrier undecaprenyl phosphate, yielding undecaprenyl-pyrophosphoryl-MurNAc-pentapeptide, known as lipid I. The sequence is that of Phospho-N-acetylmuramoyl-pentapeptide-transferase from Mycobacterium marinum (strain ATCC BAA-535 / M).